The sequence spans 196 residues: tRNA(Phe) 7-((3-amino-3-carboxypropyl)-4-demethylwyosine(37)-N(4))-methyltransferase (196 aa).

It belongs to the TYW3 family.

The catalysed reaction is 4-demethyl-7-[(3S)-3-amino-3-carboxypropyl]wyosine(37) in tRNA(Phe) + S-adenosyl-L-methionine = 7-[(3S)-3-amino-3-carboxypropyl]wyosine(37) in tRNA(Phe) + S-adenosyl-L-homocysteine + H(+). In terms of biological role, S-adenosyl-L-methionine-dependent methyltransferase that acts as a component of the wyosine derivatives biosynthesis pathway. Probably methylates N-4 position of wybutosine-86 to produce wybutosine-72. This Archaeoglobus fulgidus (strain ATCC 49558 / DSM 4304 / JCM 9628 / NBRC 100126 / VC-16) protein is tRNA(Phe) 7-((3-amino-3-carboxypropyl)-4-demethylwyosine(37)-N(4))-methyltransferase.